The primary structure comprises 473 residues: Probable glycine dehydrogenase (decarboxylating) subunit 2 (473 aa).

Residue K266 is modified to N6-(pyridoxal phosphate)lysine.

The protein belongs to the GcvP family. C-terminal subunit subfamily. The glycine cleavage system is composed of four proteins: P, T, L and H. In this organism, the P 'protein' is a heterodimer of two subunits. Pyridoxal 5'-phosphate serves as cofactor.

The catalysed reaction is N(6)-[(R)-lipoyl]-L-lysyl-[glycine-cleavage complex H protein] + glycine + H(+) = N(6)-[(R)-S(8)-aminomethyldihydrolipoyl]-L-lysyl-[glycine-cleavage complex H protein] + CO2. The glycine cleavage system catalyzes the degradation of glycine. The P protein binds the alpha-amino group of glycine through its pyridoxal phosphate cofactor; CO(2) is released and the remaining methylamine moiety is then transferred to the lipoamide cofactor of the H protein. The chain is Probable glycine dehydrogenase (decarboxylating) subunit 2 from Thermus thermophilus (strain ATCC BAA-163 / DSM 7039 / HB27).